The sequence spans 211 residues: uncharacterized protein (211 aa).

Disordered regions lie at residues 1–73 and 96–123; these read MLRR…SKLK and TNAA…ASLS. Polar residues-rich tracts occupy residues 26–35 and 53–62; these read SKSSLISLTS and APSQFLSPTN. Residues 63–73 are compositionally biased toward low complexity; the sequence is KRSTSSQSKLK. Residue S182 is modified to Phosphoserine. T184 carries the phosphothreonine modification. S186 bears the Phosphoserine mark.

This is an uncharacterized protein from Saccharomyces cerevisiae (strain ATCC 204508 / S288c) (Baker's yeast).